The following is a 166-amino-acid chain: MAAGAMSSSTLAQIPNVYQVIDPLAIDTSSTSTKRLLDEPVPHIGSITSRSYLLRVKCSSPEDCHAFFFGLATEASGNMSQHGAEYIARSMNEKLYTGRSADELCHTPFSHATILDSLDDNYTLNIEGLCYHCHCENKFSHECWKAAFIAGEKMALLCKDLRMYCH.

Belongs to the alphaherpesvirinae HHV-1 UL55 family.

It localises to the virion tegument. It is found in the host nucleus matrix. In Gallid herpesvirus 2 (strain Chicken/Md5/ATCC VR-987) (GaHV-2), this protein is Tegument protein UL55 homolog (MDV070).